The following is a 355-amino-acid chain: Chorismate synthase (355 aa).

R46 is an NADP(+) binding site. FMN contacts are provided by residues 123–125, 233–234, G273, 288–292, and R314; these read RAS, NG, and KPTPS.

Belongs to the chorismate synthase family. Homotetramer. FMNH2 is required as a cofactor.

The enzyme catalyses 5-O-(1-carboxyvinyl)-3-phosphoshikimate = chorismate + phosphate. It functions in the pathway metabolic intermediate biosynthesis; chorismate biosynthesis; chorismate from D-erythrose 4-phosphate and phosphoenolpyruvate: step 7/7. Its function is as follows. Catalyzes the anti-1,4-elimination of the C-3 phosphate and the C-6 proR hydrogen from 5-enolpyruvylshikimate-3-phosphate (EPSP) to yield chorismate, which is the branch point compound that serves as the starting substrate for the three terminal pathways of aromatic amino acid biosynthesis. This reaction introduces a second double bond into the aromatic ring system. In Campylobacter concisus (strain 13826), this protein is Chorismate synthase.